The chain runs to 357 residues: UDP-N-acetylglucosamine--N-acetylmuramyl-(pentapeptide) pyrophosphoryl-undecaprenol N-acetylglucosamine transferase (357 aa).

UDP-N-acetyl-alpha-D-glucosamine contacts are provided by residues 15 to 17 (TGG), asparagine 124, arginine 165, serine 194, and glutamine 288.

The protein belongs to the glycosyltransferase 28 family. MurG subfamily.

Its subcellular location is the cell inner membrane. The catalysed reaction is di-trans,octa-cis-undecaprenyl diphospho-N-acetyl-alpha-D-muramoyl-L-alanyl-D-glutamyl-meso-2,6-diaminopimeloyl-D-alanyl-D-alanine + UDP-N-acetyl-alpha-D-glucosamine = di-trans,octa-cis-undecaprenyl diphospho-[N-acetyl-alpha-D-glucosaminyl-(1-&gt;4)]-N-acetyl-alpha-D-muramoyl-L-alanyl-D-glutamyl-meso-2,6-diaminopimeloyl-D-alanyl-D-alanine + UDP + H(+). It participates in cell wall biogenesis; peptidoglycan biosynthesis. In terms of biological role, cell wall formation. Catalyzes the transfer of a GlcNAc subunit on undecaprenyl-pyrophosphoryl-MurNAc-pentapeptide (lipid intermediate I) to form undecaprenyl-pyrophosphoryl-MurNAc-(pentapeptide)GlcNAc (lipid intermediate II). The polypeptide is UDP-N-acetylglucosamine--N-acetylmuramyl-(pentapeptide) pyrophosphoryl-undecaprenol N-acetylglucosamine transferase (Nostoc sp. (strain PCC 7120 / SAG 25.82 / UTEX 2576)).